The chain runs to 91 residues: MAASSRAQVLDLYRAMMRESKHFSAYNYRMYAVRRIRDAFRENKNVKDPVEIQALVNKAKRDLEIIRRQVHIGQLYSTDKLIIENQEKPRT.

Pantetheine 4'-phosphate contacts are provided by R6 and K44. N6-succinyllysine is present on K47.

This sequence belongs to the complex I LYR family. Homodimer. Component of the mitochondrial core iron-sulfur cluster (ISC) complex composed of NFS1, LYRM4, NDUFAB1, ISCU, FXN, and FDX2; this complex is a heterohexamer containing two copies of each monomer. Component of the cyteine desulfurase complex composed of NFS1, LYRM4 and NDUFAB1; this complex contributes to the stability and cysteine desulfurase activity of NFS1. Interacts with FXN; this interaction is nickel-dependent. Interacts with the cytoplasmic form of NFS1; the complex increases the stability of NFS1. Forms a complex with the cytoplasmic form of NFS1; this complex increases the stability and cysteine desulfurase activity of NFS1. Interacts with NFS1. Component of a complex composed of FXN, NFS1, LYRM4 and ISCU.

Its subcellular location is the mitochondrion. The protein localises to the nucleus. It functions in the pathway cofactor biosynthesis; iron-sulfur cluster biosynthesis. Its function is as follows. Stabilizing factor, of the core iron-sulfur cluster (ISC) assembly complex, that regulates, in association with NDUFAB1, the stability and the cysteine desulfurase activity of NFS1 and participates in the [2Fe-2S] clusters assembly on the scaffolding protein ISCU. The core iron-sulfur cluster (ISC) assembly complex is involved in the de novo synthesis of a [2Fe-2S] cluster, the first step of the mitochondrial iron-sulfur protein biogenesis. This process is initiated by the cysteine desulfurase complex (NFS1:LYRM4:NDUFAB1) that produces persulfide which is delivered on the scaffold protein ISCU in a FXN-dependent manner. Then this complex is stabilized by FDX2 which provides reducing equivalents to accomplish the [2Fe-2S] cluster assembly. Finally, the [2Fe-2S] cluster is transferred from ISCU to chaperone proteins, including HSCB, HSPA9 and GLRX5. May also participates in the iron-sulfur protein biogenesis in the cytoplasm through its interaction with the cytoplasmic form of NFS1. The polypeptide is LYR motif-containing protein 4 (Mus musculus (Mouse)).